Consider the following 188-residue polypeptide: GTP cyclohydrolase 1 (188 aa).

The Zn(2+) site is built by C75, H78, and C146.

The protein belongs to the GTP cyclohydrolase I family. In terms of assembly, toroid-shaped homodecamer, composed of two pentamers of five dimers.

The enzyme catalyses GTP + H2O = 7,8-dihydroneopterin 3'-triphosphate + formate + H(+). It participates in cofactor biosynthesis; 7,8-dihydroneopterin triphosphate biosynthesis; 7,8-dihydroneopterin triphosphate from GTP: step 1/1. The polypeptide is GTP cyclohydrolase 1 (Hahella chejuensis (strain KCTC 2396)).